The following is a 296-amino-acid chain: Phosphoribosylaminoimidazole-succinocarboxamide synthase (296 aa).

Belongs to the SAICAR synthetase family.

It carries out the reaction 5-amino-1-(5-phospho-D-ribosyl)imidazole-4-carboxylate + L-aspartate + ATP = (2S)-2-[5-amino-1-(5-phospho-beta-D-ribosyl)imidazole-4-carboxamido]succinate + ADP + phosphate + 2 H(+). It participates in purine metabolism; IMP biosynthesis via de novo pathway; 5-amino-1-(5-phospho-D-ribosyl)imidazole-4-carboxamide from 5-amino-1-(5-phospho-D-ribosyl)imidazole-4-carboxylate: step 1/2. The protein is Phosphoribosylaminoimidazole-succinocarboxamide synthase of Citrifermentans bemidjiense (strain ATCC BAA-1014 / DSM 16622 / JCM 12645 / Bem) (Geobacter bemidjiensis).